Consider the following 583-residue polypeptide: MPPHLALPFRRLFWSLASSQLIPRRHRGHSLLPTTPEAHTDGSVPVFIRALAFGDRIALIDKYGHHTYRELYDRSLCLAQEICRLQGCKVGDLQEERVSFLCSNDVSYVVAQWASWMSGGVAVPLYWKHPEAQLEYFIQDSRSSLVVVGQEYLERLSPLAQRLGVPLLPLTPAVYHGATEKPTEQPVEESGWRDRGAMIFYTSGTTGRPKGALSTHRNLAAVVTGLVHSWAWTKNDVILHVLPLHHVHGVVNKLLCPLWVGATCVMLPEFSAQQVWEKFLSSEAPQITVFMAVPTVYSKLLDYYDKHFTQPHVQDFVRAVCKERIRLMVSGSAALPVPLLEKWRSATGHTLLERYGMTEIGMALSNPLTEARVPGSVGTPLPGVEVRIISENPQKGSPYIIHAEGNERGTKVTPGFEEKEGELLVRGPSVFREYWDKPEETKSAFTSDGWFRTGDTAVFKDARYWIRGRTSVDIIKTGGYKVSALEIERHLLAHPSITDVAVIGVPDMTWGQRVTAVVALQEGHSLSHGDLKEWARGVLAPYAVPSELLLVEEIPRNQMGKVNKKELLKQLYPSGQRSQPGQG.

The N-terminal 27 residues, 1–27 (MPPHLALPFRRLFWSLASSQLIPRRHR), are a transit peptide targeting the mitochondrion. ATP contacts are provided by residues 202–210 (TSGTTGRPK), aspartate 455, arginine 469, and lysine 561.

Belongs to the ATP-dependent AMP-binding enzyme family.

It localises to the mitochondrion. The enzyme catalyses tetracosanoate + ATP + CoA = tetracosanoyl-CoA + AMP + diphosphate. It catalyses the reaction malonate + ATP + CoA = malonyl-CoA + AMP + diphosphate. Its function is as follows. Catalyzes the initial reaction in intramitochondrial fatty acid synthesis, by activating malonate and methylmalonate, but not acetate, into their respective CoA thioester. May have some preference toward very-long-chain substrates. This Mus musculus (Mouse) protein is Malonate--CoA ligase ACSF3, mitochondrial.